Consider the following 183-residue polypeptide: Glutathione-regulated potassium-efflux system ancillary protein KefG (183 aa).

Belongs to the NAD(P)H dehydrogenase (quinone) family. KefG subfamily. In terms of assembly, interacts with KefB.

It is found in the cell inner membrane. The catalysed reaction is a quinone + NADH + H(+) = a quinol + NAD(+). The enzyme catalyses a quinone + NADPH + H(+) = a quinol + NADP(+). Functionally, regulatory subunit of a potassium efflux system that confers protection against electrophiles. Required for full activity of KefB. In Escherichia coli O6:K15:H31 (strain 536 / UPEC), this protein is Glutathione-regulated potassium-efflux system ancillary protein KefG.